The sequence spans 376 residues: MAVSKFVQIRRDLHKIPEIGFEEWKTQQYILDYIGTLLNEHVEVKVWRTGVIVKVKGKNPEKVIGYRADIDGLPITEETGYEFASVHEGMMHACGHDLHTTIGLGLLTAAVTERIDDDLVFLFQPAEEGPGGALPMLESEELKEWKPNIILGLHIAPEYPVGTIATKEGLLFANTSELYVDLKGKGGHAAYPHTANDMIVAASHLVTQLQSVISRNVNPLDSAVITIGKITGGTVQNIIAEKSRLEGTIRTLSVESMSRVKSRIEAIVAGIEASFQCEAVIDYGAMYHQVYNHEALTREFMQFVSEQTDMKVITCTEAMTGEDFGYMLQEIPGFMFWLGVNSEYGLHHAKLKPDEEAIEKAIVFLDQYVKWKGTRK.

Residue Asp-69 is part of the active site. The Proton acceptor role is filled by Glu-128.

Belongs to the peptidase M20A family. N-acetyldiaminopimelate deacetylase subfamily.

The enzyme catalyses N-acetyl-(2S,6S)-2,6-diaminopimelate + H2O = (2S,6S)-2,6-diaminopimelate + acetate. It participates in amino-acid biosynthesis; L-lysine biosynthesis via DAP pathway; LL-2,6-diaminopimelate from (S)-tetrahydrodipicolinate (acetylase route): step 3/3. In terms of biological role, catalyzes the conversion of N-acetyl-diaminopimelate to diaminopimelate and acetate. The chain is N-acetyldiaminopimelate deacetylase from Bacillus thuringiensis subsp. konkukian (strain 97-27).